Here is a 210-residue protein sequence, read N- to C-terminus: Small ribosomal subunit protein uS3 (210 aa).

A KH type-2 domain is found at 38 to 106; sequence LRSFLKKRLY…EVYLNIQEVR (69 aa).

The protein belongs to the universal ribosomal protein uS3 family. Part of the 30S ribosomal subunit. Forms a tight complex with proteins S10 and S14.

Its function is as follows. Binds the lower part of the 30S subunit head. Binds mRNA in the 70S ribosome, positioning it for translation. In Geotalea uraniireducens (strain Rf4) (Geobacter uraniireducens), this protein is Small ribosomal subunit protein uS3.